A 493-amino-acid chain; its full sequence is tRNA-2-methylthio-N(6)-dimethylallyladenosine synthase (493 aa).

The segment covering 1-14 has biased composition (polar residues); it reads MPMTGLLQTTLSTA. The segment at 1-31 is disordered; sequence MPMTGLLQTTLSTADQDRSGPAATTGDTPAR. An MTTase N-terminal domain is found at 35–155; sequence KRLHVITWGC…LGGMVRRAMN (121 aa). Residues C44, C80, C118, C199, C203, and C206 each contribute to the [4Fe-4S] cluster site. A Radical SAM core domain is found at 185–417; that stretch reads LAGGRTAFLT…QALLRTQQEA (233 aa). A TRAM domain is found at 420–482; that stretch reads TACIGKTVNV…TNSLSATLPD (63 aa).

This sequence belongs to the methylthiotransferase family. MiaB subfamily. In terms of assembly, monomer. [4Fe-4S] cluster is required as a cofactor.

The protein localises to the cytoplasm. The catalysed reaction is N(6)-dimethylallyladenosine(37) in tRNA + (sulfur carrier)-SH + AH2 + 2 S-adenosyl-L-methionine = 2-methylsulfanyl-N(6)-dimethylallyladenosine(37) in tRNA + (sulfur carrier)-H + 5'-deoxyadenosine + L-methionine + A + S-adenosyl-L-homocysteine + 2 H(+). In terms of biological role, catalyzes the methylthiolation of N6-(dimethylallyl)adenosine (i(6)A), leading to the formation of 2-methylthio-N6-(dimethylallyl)adenosine (ms(2)i(6)A) at position 37 in tRNAs that read codons beginning with uridine. This chain is tRNA-2-methylthio-N(6)-dimethylallyladenosine synthase, found in Granulibacter bethesdensis (strain ATCC BAA-1260 / CGDNIH1).